Consider the following 853-residue polypeptide: DNA mismatch repair protein MutS (853 aa).

ATP is bound at residue 614–621; that stretch reads GPNMGGKS.

This sequence belongs to the DNA mismatch repair MutS family.

This protein is involved in the repair of mismatches in DNA. It is possible that it carries out the mismatch recognition step. This protein has a weak ATPase activity. This is DNA mismatch repair protein MutS from Escherichia fergusonii (strain ATCC 35469 / DSM 13698 / CCUG 18766 / IAM 14443 / JCM 21226 / LMG 7866 / NBRC 102419 / NCTC 12128 / CDC 0568-73).